A 134-amino-acid polypeptide reads, in one-letter code: Lymphocyte antigen 6F (134 aa).

The first 26 residues, 1–26 (MDSCHTTKSCVLILLVVLLCAERAQG), serve as a signal peptide directing secretion. A UPAR/Ly6 domain is found at 27-119 (LECYNCLGVS…TGGSTWTMTR (93 aa)). Intrachain disulfides connect C29–C53, C32–C41, C46–C74, C78–C98, and C99–C104. A lipid anchor (GPI-anchor amidated glycine) is attached at G112. The propeptide at 113–134 (STWTMTRVLLLNLGSVFLQTLL) is removed in mature form.

The protein localises to the cell membrane. The protein is Lymphocyte antigen 6F (Ly6f) of Mus musculus (Mouse).